The following is a 702-amino-acid chain: Polyribonucleotide nucleotidyltransferase 3 (702 aa).

Residues aspartate 483 and aspartate 489 each coordinate Mg(2+). The 60-residue stretch at 550-609 (PKVTQIKVHPDKVREVIGAGGKVINKIIDETGCKITIENDGTIYVAAPDQESSRRAVEMI) folds into the KH domain. Residues 619-687 (GEVYTGKVIK…PQGKIGLSRK (69 aa)) enclose the S1 motif domain.

Belongs to the polyribonucleotide nucleotidyltransferase family. It depends on Mg(2+) as a cofactor.

Its subcellular location is the cytoplasm. The catalysed reaction is RNA(n+1) + phosphate = RNA(n) + a ribonucleoside 5'-diphosphate. Functionally, involved in mRNA degradation. Catalyzes the phosphorolysis of single-stranded polyribonucleotides processively in the 3'- to 5'-direction. In Alkaliphilus metalliredigens (strain QYMF), this protein is Polyribonucleotide nucleotidyltransferase 3.